We begin with the raw amino-acid sequence, 229 residues long: Heptaprenylglyceryl phosphate synthase (229 aa).

K12 serves as a coordination point for sn-glycerol 1-phosphate. Residues D14 and S40 each coordinate Mg(2+). Sn-glycerol 1-phosphate contacts are provided by residues 159 to 164 (YLEYSG), G189, and 209 to 210 (GN).

This sequence belongs to the GGGP/HepGP synthase family. Group I subfamily. Homodimer. Mg(2+) is required as a cofactor.

It carries out the reaction sn-glycerol 1-phosphate + all-trans-heptaprenyl diphosphate = 3-heptaprenyl-sn-glycero-1-phosphate + diphosphate. It participates in membrane lipid metabolism; glycerophospholipid metabolism. Prenyltransferase that catalyzes in vivo the transfer of the heptaprenyl moiety of heptaprenyl pyrophosphate (HepPP; 35 carbon atoms) to the C3 hydroxyl of sn-glycerol-1-phosphate (G1P), producing heptaprenylglyceryl phosphate (HepGP). This reaction is an ether-bond-formation step in the biosynthesis of archaea-type G1P-based membrane lipids found in Bacillales. The chain is Heptaprenylglyceryl phosphate synthase from Bacillus thuringiensis (strain Al Hakam).